We begin with the raw amino-acid sequence, 245 residues long: Brasilane terpene glycosides biosynthesis cluster protein D (245 aa).

C3H1-type zinc fingers lie at residues 121 to 152 (KELK…HDNV) and 161 to 185 (ICHF…HYPA). The disordered stretch occupies residues 186-245 (PHRVTAPMPSKKKSKKLRSSVADDASHPDLGKARRHDPRDDEQNDEVWRNQGRARPGQEW). Positions 209–226 (DASHPDLGKARRHDPRDD) are enriched in basic and acidic residues.

Functionally, part of the gene cluster that mediates the biosynthesis of the brasilane terpene glycosides brasilane D and E. The biosynthesis starts with the activity of the terpene cyclase braA that converts farnesyl pyrophosphate into the sesquiterpene alcohol trichobrasilenol. Subsequently, trichobrasilenol is glycosylated by the O-glycosyltransferase braB putatively using UDP-GlcNAc as sugar donor to yield brasilane A. The latter then undergoes two rounds of oxidation performed by the cytochrome P450 monooxygenase braC. In the first round braC hydroxylates C-12 forming brasilane D, which serves as substrate in the second round to establish the epoxide at the bond between C-5 and C-10 and oxidize the alcohol at C-12 to an aldehyde leading to the final product brasilane E. The sequence is that of Brasilane terpene glycosides biosynthesis cluster protein D from Annulohypoxylon truncatum (Hypoxylon truncatum).